The chain runs to 251 residues: 5-oxoprolinase subunit A (251 aa).

It belongs to the LamB/PxpA family. Forms a complex composed of PxpA, PxpB and PxpC.

The enzyme catalyses 5-oxo-L-proline + ATP + 2 H2O = L-glutamate + ADP + phosphate + H(+). Its function is as follows. Catalyzes the cleavage of 5-oxoproline to form L-glutamate coupled to the hydrolysis of ATP to ADP and inorganic phosphate. This Tolumonas auensis (strain DSM 9187 / NBRC 110442 / TA 4) protein is 5-oxoprolinase subunit A.